The following is a 606-amino-acid chain: Polyphenol oxidase A1, chloroplastic (606 aa).

The N-terminal 92 residues, 1-92, are a transit peptide targeting the chloroplast; the sequence is MTSISALSFI…TLATNPSALA (92 aa). A disordered region spans residues 32 to 63; sequence KQHQSSKLRKPKRQVTCSSNNNQNNPKEEQEL. Over residues 35-44 the composition is skewed to basic residues; sequence QSSKLRKPKR. 2 cysteine pairs are disulfide-bonded: cysteine 103/cysteine 121 and cysteine 120/cysteine 182. The Cu cation site is built by histidine 181, histidine 202, histidine 211, histidine 333, histidine 337, and histidine 367. The segment at residues 185-202 is a cross-link (2'-(S-cysteinyl)-histidine (Cys-His)); it reads CDGAYSQIGFPDLKLQVH.

The protein belongs to the tyrosinase family. Requires Cu(2+) as cofactor.

The protein localises to the plastid. The protein resides in the chloroplast thylakoid lumen. It catalyses the reaction 2 catechol + O2 = 2 1,2-benzoquinone + 2 H2O. Its function is as follows. Catalyzes the oxidation of mono- and o-diphenols to o-diquinones. This is Polyphenol oxidase A1, chloroplastic from Vicia faba (Broad bean).